Here is a 235-residue protein sequence, read N- to C-terminus: NAD(P)H-hydrate epimerase (235 aa).

The YjeF N-terminal domain occupies A18 to M221. Position 65–69 (N65–D69) interacts with (6S)-NADPHX. K(+) is bound by residues N66 and D127. (6S)-NADPHX is bound by residues G131–P137 and D160. S163 contributes to the K(+) binding site.

This sequence belongs to the NnrE/AIBP family. It depends on K(+) as a cofactor.

It catalyses the reaction (6R)-NADHX = (6S)-NADHX. It carries out the reaction (6R)-NADPHX = (6S)-NADPHX. Its function is as follows. Catalyzes the epimerization of the S- and R-forms of NAD(P)HX, a damaged form of NAD(P)H that is a result of enzymatic or heat-dependent hydration. This is a prerequisite for the S-specific NAD(P)H-hydrate dehydratase to allow the repair of both epimers of NAD(P)HX. This Caenorhabditis briggsae protein is NAD(P)H-hydrate epimerase.